The primary structure comprises 1862 residues: Ankyrin-1 (1862 aa).

Residues 1-827 are 89 kDa domain; the sequence is MGFCKADAAT…DELVGSKAER (827 aa). 23 ANK repeats span residues 40–69, 73–102, 106–135, 139–168, 170–197, 201–230, 234–263, 267–296, 300–329, 333–362, 366–395, 399–428, 432–461, 465–494, 498–527, 531–560, 564–593, 597–626, 630–659, 663–692, 696–725, 729–758, and 762–791; these read NGLNGLHLASKEGHVKMVVELLHKEIILET, KGNTALHIAALAGQDEVVRELVNYGANVNA, KGFTPLYMAAQENHLEVVKFLLENGANQNV, DGFTPLAVALQQGHENVVAHLINYGTKGKV, LPALHIAARNDDTRTAAVLLQNDPNPDV, TGFTPLHIAAHYENLNVAQLLLNRGASVNF, NGITPLHIASRRGNVIMVRLLLDRGAQIET, DELTPLHCAARNGHVRISEILLDHGAPIQA, NGLSPIHMAAQGDHLDCVRLLLQYNAEIDD, DHLTPLHVAAHCGHHRVAKVLLDKGAKPNS, NGFTPLHIACKKNHIRVMELLLKTGASIDA, SGLTPLHVASFMGHLPIVKNLLQRGASPNV, KVETPLHMAARAGHTEVAKYLLQNKAKANA, DDQTPLHCAARIGHTGMVKLLLENGASPNL, AGHTPLHTAAREGHVDTALALLEKEASQAC, KGFTPLHVAAKYGKVRLAELLLEHDAHPNA, NGLTPLHVAVHHNNLDIVKLLLPRGGSPHS, NGYTPLHIAAKQNQIEVARSLLQYGGSANA, QGVTPLHLAAQEGHTEMVALLLSKQANGNL, SGLTPLHLVSQEGHVPVADVLIKHGVTVDA, MGYTPLHVASHYGNIKLVKFLLQHQADVNA, LGYSPLHQAAQQGHTDIVTLLLKNGASPNE, and NGTTPLAIAKRLGYISVTDVLKVVTDETSV. Lysine 55 carries the phosphoserine modification. (3S)-3-hydroxyasparagine; by HIF1AN; partial is present on asparagine 101. Asparagine 229 is modified ((3S)-3-hydroxyasparagine; by HIF1AN). A Phosphoserine modification is found at serine 425. Asparagine 427 and asparagine 460 each carry (3S)-3-hydroxyasparagine; by HIF1AN. 2 positions are modified to (3S)-3-hydroxyasparagine; by HIF1AN: asparagine 625 and asparagine 658. Aspartate 691 is modified ((3S)-3-hydroxyaspartate; by HIF1AN). Asparagine 724 bears the (3S)-3-hydroxyasparagine; by HIF1AN mark. Position 755 is a phosphoserine (serine 755). At asparagine 757 the chain carries (3S)-3-hydroxyasparagine; by HIF1AN. Serine 777, serine 813, serine 830, and serine 852 each carry phosphoserine. The segment at 812–834 is disordered; the sequence is VSEDEGDELVGSKAERRDSRDVG. Positions 824–834 are enriched in basic and acidic residues; sequence KAERRDSRDVG. Threonine 862 carries the post-translational modification Phosphothreonine. Residues 872–900 form a disordered region; sequence DQEQASKEYDEDSLIPSSPATETSDNISP. Over residues 886–900 the composition is skewed to polar residues; that stretch reads IPSSPATETSDNISP. ZU5 domains are found at residues 909–1064 and 1066–1212; these read FLVS…IMSR and CQDY…LSDC. Threonine 957 carries the phosphothreonine modification. Tyrosine 1069 bears the Phosphotyrosine mark. Serine 1078 carries the phosphoserine modification. Positions 1197 to 1331 are UPA domain; the sequence is ANFTTNVSAR…PVKVRDSSRE (135 aa). A phosphothreonine mark is found at threonine 1374 and threonine 1376. Serine 1386 and serine 1388 each carry phosphoserine. The tract at residues 1387-1862 is 55 kDa regulatory domain; that stretch reads ESRLGFTSDT…KRASLKRGKQ (476 aa). Threonine 1396 carries the post-translational modification Phosphothreonine. In terms of domain architecture, Death spans 1399-1483; it reads VEMRMAVIRE…EIVNMLEGSG (85 aa). 3 positions are modified to phosphoserine: serine 1424, serine 1473, and serine 1482. The interval 1481–1506 is disordered; the sequence is GSGRQSRNLKPERRHGDREYSLSPSQ. Positions 1489–1500 are enriched in basic and acidic residues; the sequence is LKPERRHGDREY. 3 positions are modified to phosphoserine: serine 1519, serine 1529, and serine 1612. Disordered stretches follow at residues 1598–1720 and 1744–1767; these read EGAH…GPHS and VSTREHVQRGPPETGSPKAGKEPS. The segment covering 1637-1647 has biased composition (basic and acidic residues); that stretch reads EGQRSEKKRQE. Residues 1648-1666 show a composition bias toward polar residues; it reads VSGTEQDTETEVSLVSGQQ. 3 positions are modified to phosphoserine: serine 1660, serine 1675, and serine 1685. Residues 1681–1694 are compositionally biased toward basic and acidic residues; sequence VLDRSQARTLDWDK. A compositionally biased stretch (polar residues) spans 1695-1720; it reads QGSTAVHPQEATQSSWQEEVTQGPHS.

Component of the ankyrin-1 complex in the erythrocyte, composed of ANK1, RHCE, RHAG, SLC4A1, EPB42, GYPA, GYPB and AQP1. Interacts with a number of integral membrane proteins and cytoskeletal proteins. Interacts (via N-terminus) with SPTB/spectrin (beta chain). Also interacts with TTN/titin. Isoform Mu17 interacts with OBSCN isoform 3/obscurin. Interacts with HIF1AN. Interacts (via ANK 1-5 repeats) with RHCE; this interaction mediates the primary membrane attachment site for ANK1. Interacts (via ANK 1-2 repeats) with AQP1 (via the N-terminal). Interacts (via ANK 1-13 repeats) with EPB42. Interacts directly with SLC4A1 (via the cytoplasmic domain); this interaction is mediated by the SLC4A1 Band 3-II and Band 3-III dimers. Regulated by phosphorylation. Post-translationally, acylated by palmitic acid group(s). In terms of processing, hydroxylated by HIF1AN at several asparagine and 1 aspartate residue within ANK repeat region; hydroxylation seems to increase the conformational stability of this region and may also modulate protein-protein interactions mediated by the ANK repeat region.

It is found in the cytoplasm. The protein localises to the cytoskeleton. It localises to the membrane. The protein resides in the sarcoplasmic reticulum. Its function is as follows. Component of the ankyrin-1 complex, a multiprotein complex involved in the stability and shape of the erythrocyte membrane. Attaches integral membrane proteins to cytoskeletal elements; binds to the erythrocyte membrane protein band 4.2, to Na-K ATPase, to the lymphocyte membrane protein GP85, and to the cytoskeletal proteins fodrin, tubulin, vimentin and desmin. Erythrocyte ankyrins also link spectrin (beta chain) to the cytoplasmic domain of the erythrocytes anion exchange protein; they retain most or all of these binding functions. This Mus musculus (Mouse) protein is Ankyrin-1.